A 205-amino-acid chain; its full sequence is Small ribosomal subunit protein bS16 (205 aa).

Residues 110-205 are disordered; sequence GEEVKIAVGT…ADDNEEPEDE (96 aa). Over residues 123-132 the composition is skewed to basic and acidic residues; the sequence is DPLERERERA. Residues 153–205 show a composition bias toward acidic residues; the sequence is EETEAEEAEDVETADAEDADAASETDEPEAAADEADETDASADADDNEEPEDE.

This sequence belongs to the bacterial ribosomal protein bS16 family.

In Salinibacter ruber (strain DSM 13855 / M31), this protein is Small ribosomal subunit protein bS16.